Consider the following 283-residue polypeptide: Elongation factor Ts (283 aa).

Residues 80 to 83 (TDFV) are involved in Mg(2+) ion dislocation from EF-Tu.

Belongs to the EF-Ts family.

The protein resides in the cytoplasm. In terms of biological role, associates with the EF-Tu.GDP complex and induces the exchange of GDP to GTP. It remains bound to the aminoacyl-tRNA.EF-Tu.GTP complex up to the GTP hydrolysis stage on the ribosome. This Actinobacillus succinogenes (strain ATCC 55618 / DSM 22257 / CCUG 43843 / 130Z) protein is Elongation factor Ts.